The chain runs to 193 residues: Adenine phosphoribosyltransferase (193 aa).

This sequence belongs to the purine/pyrimidine phosphoribosyltransferase family. As to quaternary structure, homodimer.

The protein resides in the cytoplasm. It catalyses the reaction AMP + diphosphate = 5-phospho-alpha-D-ribose 1-diphosphate + adenine. It participates in purine metabolism; AMP biosynthesis via salvage pathway; AMP from adenine: step 1/1. In terms of biological role, catalyzes a salvage reaction resulting in the formation of AMP, that is energically less costly than de novo synthesis. The sequence is that of Adenine phosphoribosyltransferase from Bifidobacterium adolescentis (strain ATCC 15703 / DSM 20083 / NCTC 11814 / E194a).